The following is a 218-amino-acid chain: Large ribosomal subunit protein eL13 (218 aa).

Residues 196–218 are disordered; that stretch reads AKRAKEAAESEDAAKGDPKKAKK. Over residues 199-218 the composition is skewed to basic and acidic residues; the sequence is AKEAAESEDAAKGDPKKAKK.

It belongs to the eukaryotic ribosomal protein eL13 family. Component of the 60S large ribosomal subunit (LSU).

It localises to the cytoplasm. Component of the ribosome, a large ribonucleoprotein complex responsible for the synthesis of proteins in the cell. The small ribosomal subunit (SSU) binds messenger RNAs (mRNAs) and translates the encoded message by selecting cognate aminoacyl-transfer RNA (tRNA) molecules. The large subunit (LSU) contains the ribosomal catalytic site termed the peptidyl transferase center (PTC), which catalyzes the formation of peptide bonds, thereby polymerizing the amino acids delivered by tRNAs into a polypeptide chain. The nascent polypeptides leave the ribosome through a tunnel in the LSU and interact with protein factors that function in enzymatic processing, targeting, and the membrane insertion of nascent chains at the exit of the ribosomal tunnel. As part of the LSU, it is probably required for its formation and the maturation of rRNAs. This Drosophila melanogaster (Fruit fly) protein is Large ribosomal subunit protein eL13 (RpL13).